The chain runs to 102 residues: NADH-quinone oxidoreductase subunit K (102 aa).

3 helical membrane-spanning segments follow: residues 5-25, 31-51, and 62-82; these read LGHFLSLGAMLFALSVIGIFL, IVLLMAIELMLLAVNMNFVAF, and IFVFFILTVAAAESAIGLALL.

Belongs to the complex I subunit 4L family. NDH-1 is composed of 14 different subunits. Subunits NuoA, H, J, K, L, M, N constitute the membrane sector of the complex.

It localises to the cell inner membrane. The enzyme catalyses a quinone + NADH + 5 H(+)(in) = a quinol + NAD(+) + 4 H(+)(out). NDH-1 shuttles electrons from NADH, via FMN and iron-sulfur (Fe-S) centers, to quinones in the respiratory chain. The immediate electron acceptor for the enzyme in this species is believed to be ubiquinone. Couples the redox reaction to proton translocation (for every two electrons transferred, four hydrogen ions are translocated across the cytoplasmic membrane), and thus conserves the redox energy in a proton gradient. This is NADH-quinone oxidoreductase subunit K from Variovorax paradoxus (strain S110).